The primary structure comprises 230 residues: Ion-translocating oxidoreductase complex subunit E (230 aa).

A run of 6 helical transmembrane segments spans residues 18 to 38 (ALVQLLGLCPLLAVTSTATNA), 39 to 59 (LGLGLATTLVLTLTNLTVSAL), 63 to 83 (TPAEIRIPIYVMIIASVVSAV), 86 to 106 (LINAYAFGLYQSLGIFIPLIV), 125 to 145 (WLSALDGFSIGMGATGAMFVL), and 182 to 202 (PFLLARLPPGAFIGLGLMLAV).

The protein belongs to the NqrDE/RnfAE family. As to quaternary structure, the complex is composed of six subunits: RsxA, RsxB, RsxC, RsxD, RsxE and RsxG.

It is found in the cell inner membrane. Part of a membrane-bound complex that couples electron transfer with translocation of ions across the membrane. Required to maintain the reduced state of SoxR. This Salmonella dublin (strain CT_02021853) protein is Ion-translocating oxidoreductase complex subunit E.